Reading from the N-terminus, the 98-residue chain is Protein S100-A11 (98 aa).

Thr5 is modified (phosphothreonine). 2 EF-hand domains span residues 8–44 and 50–85; these read CIESLIAVFQKYSGKDGNNTQLSKTEFLSFMNTELAA and KDPGVLDRMMKKLDLNCDGQLDFQEFLNLIGGLAIA. An N6-acetyllysine modification is found at Lys22. Asn26, Gln28, Glu33, Asp63, Asn65, Asp67, Gln69, and Glu74 together coordinate Ca(2+).

This sequence belongs to the S-100 family. In terms of assembly, homodimer; disulfide-linked. Post-translationally, phosphorylation at Thr-5 significantly suppresses homodimerization and promotes association with NCL/nucleolin which induces nuclear translocation.

Its subcellular location is the cytoplasm. It is found in the nucleus. In terms of biological role, facilitates the differentiation and the cornification of keratinocytes. The protein is Protein S100-A11 (S100a11) of Mus musculus (Mouse).